A 326-amino-acid polypeptide reads, in one-letter code: Tetraacyldisaccharide 4'-kinase (326 aa).

53-60 (SVGGNGKT) is an ATP binding site.

This sequence belongs to the LpxK family.

It catalyses the reaction a lipid A disaccharide + ATP = a lipid IVA + ADP + H(+). It participates in glycolipid biosynthesis; lipid IV(A) biosynthesis; lipid IV(A) from (3R)-3-hydroxytetradecanoyl-[acyl-carrier-protein] and UDP-N-acetyl-alpha-D-glucosamine: step 6/6. In terms of biological role, transfers the gamma-phosphate of ATP to the 4'-position of a tetraacyldisaccharide 1-phosphate intermediate (termed DS-1-P) to form tetraacyldisaccharide 1,4'-bis-phosphate (lipid IVA). The chain is Tetraacyldisaccharide 4'-kinase from Actinobacillus pleuropneumoniae serotype 5b (strain L20).